Here is an 81-residue protein sequence, read N- to C-terminus: Sulfur carrier protein TusA (81 aa).

Cys19 functions as the Cysteine persulfide intermediate in the catalytic mechanism.

Belongs to the sulfur carrier protein TusA family.

It is found in the cytoplasm. Its function is as follows. Sulfur carrier protein which probably makes part of a sulfur-relay system. The protein is Sulfur carrier protein TusA of Shewanella baltica (strain OS185).